The chain runs to 260 residues: Indole-3-glycerol phosphate synthase (260 aa).

This sequence belongs to the TrpC family.

It catalyses the reaction 1-(2-carboxyphenylamino)-1-deoxy-D-ribulose 5-phosphate + H(+) = (1S,2R)-1-C-(indol-3-yl)glycerol 3-phosphate + CO2 + H2O. It functions in the pathway amino-acid biosynthesis; L-tryptophan biosynthesis; L-tryptophan from chorismate: step 4/5. This is Indole-3-glycerol phosphate synthase from Neisseria meningitidis serogroup B (strain ATCC BAA-335 / MC58).